The following is a 72-amino-acid chain: Large ribosomal subunit protein bL31 (72 aa).

Residues cysteine 16, cysteine 18, cysteine 37, and cysteine 40 each coordinate Zn(2+).

The protein belongs to the bacterial ribosomal protein bL31 family. Type A subfamily. Part of the 50S ribosomal subunit. Requires Zn(2+) as cofactor.

Binds the 23S rRNA. This chain is Large ribosomal subunit protein bL31, found in Buchnera aphidicola subsp. Acyrthosiphon pisum (strain APS) (Acyrthosiphon pisum symbiotic bacterium).